Consider the following 50-residue polypeptide: Protein hunchback (50 aa).

3 consecutive C2H2-type zinc fingers follow at residues 1–5, 11–33, and 39–50; these read HIRNH, FKCNKCSYSCVNKSMLNSHLKSH, and YRCADCAYATKY.

The protein belongs to the hunchback C2H2-type zinc-finger protein family.

Its subcellular location is the nucleus. Functionally, gap class segmentation protein that controls development of head structures. The polypeptide is Protein hunchback (hb) (Schultesia lampyridiformis (Firefly mimic roach)).